Consider the following 739-residue polypeptide: Lysine decarboxylase (739 aa).

An N6-(pyridoxal phosphate)lysine modification is found at lysine 367. Residues 714–726 are compositionally biased toward basic and acidic residues; that stretch reads ADEPGDKPSDTVK. Positions 714 to 739 are disordered; sequence ADEPGDKPSDTVKKAPGKKPSAAKKS. Over residues 728–739 the composition is skewed to basic residues; sequence APGKKPSAAKKS.

The protein belongs to the Orn/Lys/Arg decarboxylase class-I family. It depends on pyridoxal 5'-phosphate as a cofactor.

It is found in the cytoplasm. It catalyses the reaction L-lysine + H(+) = cadaverine + CO2. In Hafnia alvei, this protein is Lysine decarboxylase.